Here is a 73-residue protein sequence, read N- to C-terminus: UPF0435 protein Lm4b_01721 (73 aa).

The protein belongs to the UPF0435 family.

This Listeria monocytogenes serotype 4b (strain CLIP80459) protein is UPF0435 protein Lm4b_01721.